We begin with the raw amino-acid sequence, 433 residues long: GPI mannosyltransferase 2 (433 aa).

Residue Met-1 is a topological domain, cytoplasmic. The chain crosses the membrane as a helical span at residues 2 to 22 (IVGLTLYFVLFRSIQYLLVFL). Residues 23-109 (TPIRQFDTST…NNDSIYHALR (87 aa)) are Lumenal-facing. N-linked (GlcNAc...) asparagine glycans are attached at residues Asn-69 and Asn-101. A helical transmembrane segment spans residues 110 to 130 (VGVAIENVLFYLSGIVLYFLT). Residues 131–161 (KKIFSQNIRQSQFARTIAKKTSLLFFLTSAA) lie on the Cytoplasmic side of the membrane. A helical membrane pass occupies residues 162-182 (GFLTSIYSEPLSFFFAFVGIW). Over 183 to 215 (SRECSISVPVLGQFDISWRYWFPYSFISMACFT) the chain is Lumenal. The chain crosses the membrane as a helical span at residues 216–236 (LASLNRSNCVLLGIYFIFDLI). Residues 237-243 (ELTKNRK) lie on the Cytoplasmic side of the membrane. The chain crosses the membrane as a helical span at residues 244–264 (FVKAICFPLLSGSLMFSALLY). The Lumenal segment spans residues 265-318 (QQYYLPYKTFCPQRGEWCKSQLFSSIFITKTSLYSYIQSHYWGVGLLKYWTPNN). A helical membrane pass occupies residues 319-339 (IPNFLFAVPNIIILIYSSIYF). Residues 340–350 (SKIYPSYNLKA) lie on the Cytoplasmic side of the membrane. The helical transmembrane segment at 351-371 (LVWITRALVVIVCFFAHVQIL) threads the bilayer. The Lumenal segment spans residues 372-409 (NRIASFLPLHLWYLADRLVKTSDPKKMENPKGDDKIVK). The helical transmembrane segment at 410-430 (FYIYWLAFWIPLQTILFAAFL) threads the bilayer. The Cytoplasmic segment spans residues 431-433 (PPA).

This sequence belongs to the PIGV family. Part of the GPI mannosyltransferase 2 complex composed of GPI18 and PGA1.

It is found in the endoplasmic reticulum membrane. Its pathway is glycolipid biosynthesis; glycosylphosphatidylinositol-anchor biosynthesis. Mannosyltransferase involved in glycosylphosphatidylinositol-anchor biosynthesis. Responsible for the transfer of the second mannose to the glycosylphosphatidylinositol during GPI precursor assembly. This Saccharomyces cerevisiae (strain ATCC 204508 / S288c) (Baker's yeast) protein is GPI mannosyltransferase 2 (GPI18).